Reading from the N-terminus, the 567-residue chain is Potassium-transporting ATPase potassium-binding subunit (567 aa).

Helical transmembrane passes span 3–23, 64–84, 136–156, 179–199, 220–240, 254–274, 285–305, 330–350, 374–394, 420–440, 488–508, and 527–547; these read MIGW…TKPL, LTYT…IYGV, GLTH…MALI, LYVL…QGIP, VGPV…GGFF, LSNF…TNVF, WAIL…TYWA, FGLV…CGAV, IIVG…VLAI, AMLA…VGVV, LASA…AIAG, and GGLF…LTFF.

The protein belongs to the KdpA family. The system is composed of three essential subunits: KdpA, KdpB and KdpC.

Its subcellular location is the cell inner membrane. Its function is as follows. Part of the high-affinity ATP-driven potassium transport (or Kdp) system, which catalyzes the hydrolysis of ATP coupled with the electrogenic transport of potassium into the cytoplasm. This subunit binds the periplasmic potassium ions and delivers the ions to the membrane domain of KdpB through an intramembrane tunnel. The sequence is that of Potassium-transporting ATPase potassium-binding subunit from Bradyrhizobium diazoefficiens (strain JCM 10833 / BCRC 13528 / IAM 13628 / NBRC 14792 / USDA 110).